Consider the following 393-residue polypeptide: Acetate kinase (393 aa).

A Mg(2+)-binding site is contributed by asparagine 6. Lysine 13 lines the ATP pocket. Arginine 87 is a substrate binding site. Aspartate 143 acts as the Proton donor/acceptor in catalysis. ATP-binding positions include 203 to 207 (HLGNG), 278 to 280 (DMR), and 326 to 330 (GIGEN). Position 380 (glutamate 380) interacts with Mg(2+).

This sequence belongs to the acetokinase family. As to quaternary structure, homodimer. Mg(2+) serves as cofactor. It depends on Mn(2+) as a cofactor.

Its subcellular location is the cytoplasm. The enzyme catalyses acetate + ATP = acetyl phosphate + ADP. The protein operates within metabolic intermediate biosynthesis; acetyl-CoA biosynthesis; acetyl-CoA from acetate: step 1/2. In terms of biological role, catalyzes the formation of acetyl phosphate from acetate and ATP. Can also catalyze the reverse reaction. This is Acetate kinase from Mycoplasma capricolum subsp. capricolum (strain California kid / ATCC 27343 / NCTC 10154).